A 513-amino-acid polypeptide reads, in one-letter code: Ribonuclease Y (513 aa).

A helical membrane pass occupies residues 3–23 (IGTLLLFTFLGLVAGATAVWL). The disordered stretch occupies residues 77–96 (LQSVESKLKSREQTLNQRQE). Positions 82-96 (SKLKSREQTLNQRQE) are enriched in basic and acidic residues. The region spanning 203–263 (SVTVFHIESD…VRREIARLAL (61 aa)) is the KH domain. The HD domain occupies 329 to 422 (LLQHSRETAN…VQVCDAISGA (94 aa)).

It belongs to the RNase Y family.

The protein resides in the cell membrane. Functionally, endoribonuclease that initiates mRNA decay. This is Ribonuclease Y from Porphyromonas gingivalis (strain ATCC BAA-308 / W83).